Here is a 384-residue protein sequence, read N- to C-terminus: GDP-mannose transporter (384 aa).

Topologically, residues 1-40 are cytoplasmic; that stretch reads MVEDKKTDDYTIEMDKMDQGSKNFEAAAPPPQPRTPPAGS. The helical transmembrane segment at 41 to 61 threads the bilayer; that stretch reads ISNNPILPVLAYCGSSILMTV. The Lumenal portion of the chain corresponds to 62 to 69; that stretch reads MNKYVLSG. A helical transmembrane segment spans residues 70–90; sequence LDFNLNFFLLCVQSIVCIVAI. Over 91-110 the chain is Cytoplasmic; it reads QTCKSCGLITYRDFSADEAR. Residues 111–127 form a helical membrane-spanning segment; it reads KWFPITLLLIGMIYTGS. The Lumenal portion of the chain corresponds to 128 to 134; sequence KALQFLS. The chain crosses the membrane as a helical span at residues 135-151; that stretch reads IPVYTIFKNLTIILIAY. Residues 152–160 lie on the Cytoplasmic side of the membrane; sequence GEVLWFGGS. Residues 161–182 traverse the membrane as a helical segment; that stretch reads VTGLTLFSFGLMVLSSIIAAWA. At 183 to 200 the chain is on the lumenal side; sequence DIKHAVESTGDATAKVST. The helical transmembrane segment at 201–221 threads the bilayer; the sequence is LNAGYIWMLVNCLCTSSYVLG. Residues 222–236 are Cytoplasmic-facing; it reads MRKRIKLTNFKDFDT. A helical membrane pass occupies residues 237–257; the sequence is LAMFYNNLLSIPVLIVLTGLM. Over 258–276 the chain is Lumenal; it reads EDWSSANITRNFPPADRNN. N-linked (GlcNAc...) asparagine glycosylation is present at asparagine 264. The helical transmembrane segment at 277-297 threads the bilayer; it reads IIFAMILSGLSSVFISYTSAW. Residues 298-305 are Cytoplasmic-facing; sequence CVRVTSST. The helical transmembrane segment at 306–326 threads the bilayer; it reads TYSMVGALNKLPIALSGLIFF. At 327 to 329 the chain is on the lumenal side; the sequence is DAP. Residues 330–350 traverse the membrane as a helical segment; that stretch reads VTFPSVSAIVVGFVSGIVYAV. The Cytoplasmic segment spans residues 351 to 384; the sequence is AKIKQNAKPKTGVLPMSNPPVSASSQSMRDSLRS. A disordered region spans residues 364-384; it reads LPMSNPPVSASSQSMRDSLRS. A compositionally biased stretch (polar residues) spans 369-384; it reads PPVSASSQSMRDSLRS.

It belongs to the TPT transporter family. SLC35D subfamily. In terms of assembly, homooligomer.

Its subcellular location is the golgi apparatus membrane. It localises to the cytoplasmic vesicle membrane. It is found in the endoplasmic reticulum membrane. Its function is as follows. Involved in the import of GDP-mannose from the cytoplasm into the Golgi lumen. This is GDP-mannose transporter (gmt1) from Aspergillus terreus (strain NIH 2624 / FGSC A1156).